The primary structure comprises 206 residues: Homoserine/homoserine lactone efflux protein (206 aa).

Transmembrane regions (helical) follow at residues 5 to 25 (WWFA…SGAI), 45 to 65 (GLQT…GTLF), 68 to 88 (SVIA…WLGI), 117 to 137 (FVNL…PQFI), 148 to 168 (IVLG…YATL), and 182 to 202 (MKAL…LLAS).

It belongs to the Rht family.

The protein localises to the cell membrane. Functionally, conducts the efflux of homoserine and homoserine lactone. The protein is Homoserine/homoserine lactone efflux protein (rhtB) of Escherichia coli O157:H7.